Consider the following 215-residue polypeptide: ATP phosphoribosyltransferase (215 aa).

The protein belongs to the ATP phosphoribosyltransferase family. Short subfamily. As to quaternary structure, heteromultimer composed of HisG and HisZ subunits.

It is found in the cytoplasm. The catalysed reaction is 1-(5-phospho-beta-D-ribosyl)-ATP + diphosphate = 5-phospho-alpha-D-ribose 1-diphosphate + ATP. It functions in the pathway amino-acid biosynthesis; L-histidine biosynthesis; L-histidine from 5-phospho-alpha-D-ribose 1-diphosphate: step 1/9. In terms of biological role, catalyzes the condensation of ATP and 5-phosphoribose 1-diphosphate to form N'-(5'-phosphoribosyl)-ATP (PR-ATP). Has a crucial role in the pathway because the rate of histidine biosynthesis seems to be controlled primarily by regulation of HisG enzymatic activity. This chain is ATP phosphoribosyltransferase, found in Prochlorococcus marinus subsp. pastoris (strain CCMP1986 / NIES-2087 / MED4).